The sequence spans 152 residues: Deoxyuridine 5'-triphosphate nucleotidohydrolase (152 aa).

Residues 70 to 72, N83, 87 to 89, and M97 each bind substrate; these read RSG and LID.

This sequence belongs to the dUTPase family. It depends on Mg(2+) as a cofactor.

It carries out the reaction dUTP + H2O = dUMP + diphosphate + H(+). It functions in the pathway pyrimidine metabolism; dUMP biosynthesis; dUMP from dCTP (dUTP route): step 2/2. This enzyme is involved in nucleotide metabolism: it produces dUMP, the immediate precursor of thymidine nucleotides and it decreases the intracellular concentration of dUTP so that uracil cannot be incorporated into DNA. In Buchnera aphidicola subsp. Baizongia pistaciae (strain Bp), this protein is Deoxyuridine 5'-triphosphate nucleotidohydrolase.